The chain runs to 359 residues: 3-dehydroquinate synthase (359 aa).

NAD(+) is bound by residues 70–75 (DGEQYK), 105–109 (GVIGD), 129–130 (TT), Lys-142, Lys-151, and 169–172 (FYKT). Zn(2+)-binding residues include Glu-184, His-247, and His-264.

Belongs to the sugar phosphate cyclases superfamily. Dehydroquinate synthase family. Requires Co(2+) as cofactor. It depends on Zn(2+) as a cofactor. NAD(+) serves as cofactor.

It is found in the cytoplasm. The catalysed reaction is 7-phospho-2-dehydro-3-deoxy-D-arabino-heptonate = 3-dehydroquinate + phosphate. It participates in metabolic intermediate biosynthesis; chorismate biosynthesis; chorismate from D-erythrose 4-phosphate and phosphoenolpyruvate: step 2/7. Its function is as follows. Catalyzes the conversion of 3-deoxy-D-arabino-heptulosonate 7-phosphate (DAHP) to dehydroquinate (DHQ). This Francisella tularensis subsp. holarctica (strain FTNF002-00 / FTA) protein is 3-dehydroquinate synthase.